Reading from the N-terminus, the 342-residue chain is Farnesyl pyrophosphate synthase 2 (342 aa).

The isopentenyl diphosphate site is built by Lys47, Arg50, and Gln86. Mg(2+) is bound by residues Asp93 and Asp97. Residue Arg102 participates in dimethylallyl diphosphate binding. Arg103 serves as a coordination point for isopentenyl diphosphate. Dimethylallyl diphosphate is bound by residues Lys190, Thr191, Gln229, Lys246, and Lys255.

Belongs to the FPP/GGPP synthase family. Requires Mg(2+) as cofactor.

Its subcellular location is the cytoplasm. It carries out the reaction isopentenyl diphosphate + dimethylallyl diphosphate = (2E)-geranyl diphosphate + diphosphate. The enzyme catalyses isopentenyl diphosphate + (2E)-geranyl diphosphate = (2E,6E)-farnesyl diphosphate + diphosphate. It participates in isoprenoid biosynthesis; farnesyl diphosphate biosynthesis; farnesyl diphosphate from geranyl diphosphate and isopentenyl diphosphate: step 1/1. Its pathway is isoprenoid biosynthesis; geranyl diphosphate biosynthesis; geranyl diphosphate from dimethylallyl diphosphate and isopentenyl diphosphate: step 1/1. Catalyzes the sequential condensation of isopentenyl pyrophosphate with the allylic pyrophosphates, dimethylallyl pyrophosphate, and then with the resultant geranylpyrophosphate to the ultimate product farnesyl pyrophosphate. The polypeptide is Farnesyl pyrophosphate synthase 2 (FPS2) (Lupinus albus (White lupine)).